Reading from the N-terminus, the 421-residue chain is UDP-N-acetylglucosamine 1-carboxyvinyltransferase (421 aa).

22–23 lines the phosphoenolpyruvate pocket; sequence KN. Residue R95 coordinates UDP-N-acetyl-alpha-D-glucosamine. C119 (proton donor) is an active-site residue. C119 carries the post-translational modification 2-(S-cysteinyl)pyruvic acid O-phosphothioketal. UDP-N-acetyl-alpha-D-glucosamine contacts are provided by residues 124–128, D309, and I331; that span reads RPVDQ.

The protein belongs to the EPSP synthase family. MurA subfamily.

The protein resides in the cytoplasm. The enzyme catalyses phosphoenolpyruvate + UDP-N-acetyl-alpha-D-glucosamine = UDP-N-acetyl-3-O-(1-carboxyvinyl)-alpha-D-glucosamine + phosphate. Its pathway is cell wall biogenesis; peptidoglycan biosynthesis. Its function is as follows. Cell wall formation. Adds enolpyruvyl to UDP-N-acetylglucosamine. This is UDP-N-acetylglucosamine 1-carboxyvinyltransferase from Leptothrix cholodnii (strain ATCC 51168 / LMG 8142 / SP-6) (Leptothrix discophora (strain SP-6)).